The primary structure comprises 262 residues: Diphthine synthase (262 aa).

Residues leucine 10, aspartate 87, valine 90, 115–116 (SI), leucine 166, alanine 209, and histidine 234 each bind S-adenosyl-L-methionine.

It belongs to the diphthine synthase family. In terms of assembly, homodimer.

The enzyme catalyses 2-[(3S)-amino-3-carboxypropyl]-L-histidyl-[translation elongation factor 2] + 3 S-adenosyl-L-methionine = diphthine-[translation elongation factor 2] + 3 S-adenosyl-L-homocysteine + 3 H(+). The protein operates within protein modification; peptidyl-diphthamide biosynthesis. S-adenosyl-L-methionine-dependent methyltransferase that catalyzes the trimethylation of the amino group of the modified target histidine residue in translation elongation factor 2 (EF-2), to form an intermediate called diphthine. The three successive methylation reactions represent the second step of diphthamide biosynthesis. In Pyrococcus abyssi (strain GE5 / Orsay), this protein is Diphthine synthase.